A 128-amino-acid chain; its full sequence is Fumarate reductase subunit C (128 aa).

The next 3 helical transmembrane spans lie at alanine 31–glycine 51, valine 67–valine 87, and isoleucine 106–valine 126.

The protein belongs to the FrdC family. As to quaternary structure, part of an enzyme complex containing four subunits: a flavoprotein (FrdA), an iron-sulfur protein (FrdB), and two hydrophobic anchor proteins (FrdC and FrdD).

Its subcellular location is the cell inner membrane. Anchors the catalytic components of the fumarate reductase complex to the cell membrane, binds quinones. The protein is Fumarate reductase subunit C of Haemophilus ducreyi (strain 35000HP / ATCC 700724).